We begin with the raw amino-acid sequence, 382 residues long: Galactokinase (382 aa).

Glu-34–Asp-37 is a binding site for substrate. Gly-124 to Ser-130 serves as a coordination point for ATP. Residues Ser-130 and Glu-162 each contribute to the Mg(2+) site. The active-site Proton acceptor is Asp-174. A substrate-binding site is contributed by Tyr-223.

Belongs to the GHMP kinase family. GalK subfamily.

The protein localises to the cytoplasm. The enzyme catalyses alpha-D-galactose + ATP = alpha-D-galactose 1-phosphate + ADP + H(+). It functions in the pathway carbohydrate metabolism; galactose metabolism. Its function is as follows. Catalyzes the transfer of the gamma-phosphate of ATP to D-galactose to form alpha-D-galactose-1-phosphate (Gal-1-P). The chain is Galactokinase from Shigella flexneri.